An 861-amino-acid polypeptide reads, in one-letter code: Actin-binding LIM protein 1 (861 aa).

LIM zinc-binding domains lie at 97 to 156, 156 to 216, 224 to 283, and 283 to 343; these read IHCH…MYGT, TRCH…MSSS, SNCA…LFGV, and VKCE…TKTE. Ser216 carries the post-translational modification Phosphoserine. Residues 374–414 form a disordered region; sequence LQLLSPPCLTNSNKNPRQPTRTSSESIYSRPGSSIPGSPGH. The segment covering 381–400 has biased composition (polar residues); it reads CLTNSNKNPRQPTRTSSESI. Positions 404 to 413 are enriched in low complexity; sequence PGSSIPGSPG. Position 411 is a phosphoserine (Ser411). 2 positions are modified to phosphotyrosine: Tyr417 and Tyr440. Disordered stretches follow at residues 459 to 590 and 634 to 682; these read EDKQ…PTYA and FPAA…ELLR. Phosphoserine is present on residues Ser466, Ser470, and Ser475. Residues 467 to 478 are compositionally biased toward polar residues; the sequence is LGESPRTLSPTP. Phosphothreonine is present on Thr477. Position 479 is a phosphoserine (Ser479). Tyr483 carries the post-translational modification Phosphotyrosine. The segment covering 493 to 518 has biased composition (polar residues); that stretch reads RSTSQGSINSPVYSRHSYTPTTSRSP. Phosphoserine occurs at positions 496, 499, and 502. The span at 536-546 shows a compositional bias: low complexity; sequence PLRTSSFSSTH. Ser582 and Ser671 each carry phosphoserine. The stretch at 673–723 forms a coiled coil; the sequence is REEDEEELLRRRQLQEEQLMKLNSGLGQLILKEEMEKESRERASLASRYDS. A Glycyl lysine isopeptide (Lys-Gly) (interchain with G-Cter in SUMO2) cross-link involves residue Lys704. The segment at 713–748 is disordered; that stretch reads ERASLASRYDSPLHSASHAPSSKTSSLPGYGKNGLH. Phosphoserine is present on residues Ser723, Ser738, Ser760, and Ser789. A compositionally biased stretch (low complexity) spans 724 to 738; the sequence is PLHSASHAPSSKTSS. Positions 793-861 constitute an HP domain; it reads MLEPKIFPYE…NDMKKKAKLF (69 aa).

In terms of assembly, binds F-actin. Interacts with ABRA. In terms of tissue distribution, isoform 1 is detected in adult retina, where it is highly expressed in the ganglion layer. Detected in rod inner segment. Isoform 2 is highly expressed in adult retina, brain, kidney and heart. Isoform 3 is highly expressed in adult retina, brain, kidney, liver, skeletal muscle, spleen and heart. Detected in embryonic retina, brain, spinal cord, peripheral sensory ganglia and thymus.

It is found in the cytoplasm. The protein resides in the cytoskeleton. May act as scaffold protein. May play a role in the development of the retina. Has been suggested to play a role in axon guidance. The sequence is that of Actin-binding LIM protein 1 (Ablim1) from Mus musculus (Mouse).